The following is a 115-amino-acid chain: Large ribosomal subunit protein bL19 (115 aa).

The protein belongs to the bacterial ribosomal protein bL19 family.

Its function is as follows. This protein is located at the 30S-50S ribosomal subunit interface and may play a role in the structure and function of the aminoacyl-tRNA binding site. This is Large ribosomal subunit protein bL19 from Clostridium perfringens (strain ATCC 13124 / DSM 756 / JCM 1290 / NCIMB 6125 / NCTC 8237 / Type A).